Here is a 249-residue protein sequence, read N- to C-terminus: Urease accessory protein UreG (249 aa).

The span at 1–13 (MHLGHEEFQRTDG) shows a compositional bias: basic and acidic residues. Positions 1-34 (MHLGHEEFQRTDGRASTGPADAGPAGAGRAPRIG) are disordered. The segment covering 18-33 (GPADAGPAGAGRAPRI) has biased composition (low complexity). 37–44 (GPVGSGKT) provides a ligand contact to GTP. Positions 229–249 (PRGGSYDASDASNASQPLNRM) are disordered. A compositionally biased stretch (polar residues) spans 238–249 (DASNASQPLNRM).

This sequence belongs to the SIMIBI class G3E GTPase family. UreG subfamily. As to quaternary structure, homodimer. UreD, UreF and UreG form a complex that acts as a GTP-hydrolysis-dependent molecular chaperone, activating the urease apoprotein by helping to assemble the nickel containing metallocenter of UreC. The UreE protein probably delivers the nickel.

The protein localises to the cytoplasm. Facilitates the functional incorporation of the urease nickel metallocenter. This process requires GTP hydrolysis, probably effectuated by UreG. The polypeptide is Urease accessory protein UreG (Frankia casuarinae (strain DSM 45818 / CECT 9043 / HFP020203 / CcI3)).